The following is a 416-amino-acid chain: Tyrosine--tRNA ligase (416 aa).

Position 34 (Y34) interacts with L-tyrosine. Residues 39-48 (PTGDSLHIGH) carry the 'HIGH' region motif. L-tyrosine contacts are provided by Y165 and Q169. The short motif at 227-231 (KFGKT) is the 'KMSKS' region element. K230 lines the ATP pocket. In terms of domain architecture, S4 RNA-binding spans 349–416 (KNIVEWLVDT…KKKYFLARVK (68 aa)).

The protein belongs to the class-I aminoacyl-tRNA synthetase family. TyrS type 1 subfamily. In terms of assembly, homodimer.

It is found in the cytoplasm. It carries out the reaction tRNA(Tyr) + L-tyrosine + ATP = L-tyrosyl-tRNA(Tyr) + AMP + diphosphate + H(+). Functionally, catalyzes the attachment of tyrosine to tRNA(Tyr) in a two-step reaction: tyrosine is first activated by ATP to form Tyr-AMP and then transferred to the acceptor end of tRNA(Tyr). The chain is Tyrosine--tRNA ligase from Ligilactobacillus salivarius (strain UCC118) (Lactobacillus salivarius).